The sequence spans 420 residues: MLPGLRRLLQGPASACLLLTLLALPPVTPSCPMLCTCYSSPPTVSCQANNFSSVPLSLPPSTQRLFLQNNLIRSLRPGTFGPNLLTLWLFSNNLSTIYPGTFRHLQALEELDLGDNRHLRSLEPDTFQGLERLQSLHLYRCQLSSLPGNIFRGLVSLQYLYLQENSLLHLQDDLFADLANLSHLFLHGNRLRLLTEHVFRGLGSLDRLLLHGNRLQGVHRAAFHGLSRLTILYLFNNSLASLPGEALADLPALEFLRLNANPWACDCRARPLWAWFQRARVSSSDVTCATPPERQGRDLRTLRDTDFQACPPPTPTRPGSRARGNSSSNHLYGVAEAGAPPADPSTLYRDLPAEDSRGRQGGDAPTEDDYWGGYGGEDQRGEQTCPGAACQAPADSRGPVLSAGLRTPLLCLLLLAPHHL.

An N-terminal signal peptide occupies residues 1 to 30 (MLPGLRRLLQGPASACLLLTLLALPPVTPS). Disulfide bonds link Cys31–Cys37 and Cys35–Cys46. In terms of domain architecture, LRRNT spans 31–60 (CPMLCTCYSSPPTVSCQANNFSSVPLSLPP). Asn50 carries an N-linked (GlcNAc...) asparagine glycan. LRR repeat units follow at residues 61–82 (STQRLFLQNNLIRSLRPGTFGP), 83–104 (NLLTLWLFSNNLSTIYPGTFRH), 107–129 (ALEELDLGDNRHLRSLEPDTFQG), 132–153 (RLQSLHLYRCQLSSLPGNIFRG), 156–177 (SLQYLYLQENSLLHLQDDLFAD), 180–201 (NLSHLFLHGNRLRLLTEHVFRG), 204–225 (SLDRLLLHGNRLQGVHRAAFHG), and 228–249 (RLTILYLFNNSLASLPGEALAD). N-linked (GlcNAc...) asparagine glycosylation occurs at Asn93. Residue Asn236 is glycosylated (N-linked (GlcNAc...) asparagine). Residues 261 to 312 (NPWACDCRARPLWAWFQRARVSSSDVTCATPPERQGRDLRTLRDTDFQACPP) enclose the LRRCT domain. 2 disulfide bridges follow: Cys265–Cys288 and Cys267–Cys310. The segment at 286 to 390 (VTCATPPERQ…GEQTCPGAAC (105 aa)) is disordered. Residues 294 to 306 (RQGRDLRTLRDTD) are compositionally biased toward basic and acidic residues. An important for interaction with MAG region spans residues 315–327 (PTRPGSRARGNSS). The span at 351–360 (LPAEDSRGRQ) shows a compositional bias: basic and acidic residues. Cys390 carries GPI-anchor amidated cysteine lipidation. The propeptide at 391-420 (QAPADSRGPVLSAGLRTPLLCLLLLAPHHL) is removed in mature form.

The protein belongs to the Nogo receptor family. As to quaternary structure, interaction with MAG is controversial, and may be indirect. Interacts with MAG. Does not interact with OMG and RTN4. Undergoes zinc metalloproteinase-mediated ectodomain shedding in neuroblastoma cells; is released both as a full-length ectodomain and an N-terminal fragment containing the leucine-rich repeat (LRR) region of the protein. In terms of processing, N-glycosylated. O-glycosylated. Contains terminal sialic acid groups on its glycan chains. In terms of tissue distribution, detected in adult brain, in neocortex, hippocampus, striatum and dorsal root ganglion neurons, and in retina (at protein level). In brain, detected in cerebral cortex and hippocampus. Weak or no expression detected in the cerebellum, thalamus or striatum.

Its subcellular location is the cell membrane. It is found in the cell projection. It localises to the dendrite. The protein resides in the perikaryon. The protein localises to the axon. Its subcellular location is the membrane raft. In terms of biological role, cell surface receptor that plays a functionally redundant role in the inhibition of neurite outgrowth mediated by MAG. Plays a functionally redundant role in postnatal brain development. Contributes to normal axon migration across the brain midline and normal formation of the corpus callosum. Does not seem to play a significant role in regulating axon regeneration in the adult central nervous system. Protects motoneurons against apoptosis; protection against apoptosis is probably mediated by MAG. Like other family members, plays a role in restricting the number dendritic spines and the number of synapses that are formed during brain development. Signaling mediates activation of Rho and downstream reorganization of the actin cytoskeleton. The sequence is that of Reticulon-4 receptor-like 2 from Rattus norvegicus (Rat).